The sequence spans 483 residues: Aspartyl/glutamyl-tRNA(Asn/Gln) amidotransferase subunit B (483 aa).

Belongs to the GatB/GatE family. GatB subfamily. Heterotrimer of A, B and C subunits.

It catalyses the reaction L-glutamyl-tRNA(Gln) + L-glutamine + ATP + H2O = L-glutaminyl-tRNA(Gln) + L-glutamate + ADP + phosphate + H(+). It carries out the reaction L-aspartyl-tRNA(Asn) + L-glutamine + ATP + H2O = L-asparaginyl-tRNA(Asn) + L-glutamate + ADP + phosphate + 2 H(+). Its function is as follows. Allows the formation of correctly charged Asn-tRNA(Asn) or Gln-tRNA(Gln) through the transamidation of misacylated Asp-tRNA(Asn) or Glu-tRNA(Gln) in organisms which lack either or both of asparaginyl-tRNA or glutaminyl-tRNA synthetases. The reaction takes place in the presence of glutamine and ATP through an activated phospho-Asp-tRNA(Asn) or phospho-Glu-tRNA(Gln). The polypeptide is Aspartyl/glutamyl-tRNA(Asn/Gln) amidotransferase subunit B (Anaeromyxobacter sp. (strain Fw109-5)).